The primary structure comprises 477 residues: Aspartyl/glutamyl-tRNA(Asn/Gln) amidotransferase subunit B (477 aa).

Belongs to the GatB/GatE family. GatB subfamily. In terms of assembly, heterotrimer of A, B and C subunits.

It catalyses the reaction L-glutamyl-tRNA(Gln) + L-glutamine + ATP + H2O = L-glutaminyl-tRNA(Gln) + L-glutamate + ADP + phosphate + H(+). The catalysed reaction is L-aspartyl-tRNA(Asn) + L-glutamine + ATP + H2O = L-asparaginyl-tRNA(Asn) + L-glutamate + ADP + phosphate + 2 H(+). Allows the formation of correctly charged Asn-tRNA(Asn) or Gln-tRNA(Gln) through the transamidation of misacylated Asp-tRNA(Asn) or Glu-tRNA(Gln) in organisms which lack either or both of asparaginyl-tRNA or glutaminyl-tRNA synthetases. The reaction takes place in the presence of glutamine and ATP through an activated phospho-Asp-tRNA(Asn) or phospho-Glu-tRNA(Gln). The protein is Aspartyl/glutamyl-tRNA(Asn/Gln) amidotransferase subunit B of Coxiella burnetii (strain CbuK_Q154) (Coxiella burnetii (strain Q154)).